Here is a 410-residue protein sequence, read N- to C-terminus: Argininosuccinate synthase (410 aa).

ATP contacts are provided by residues 13–21 (AYSGGLDTS) and Ala-40. L-citrulline contacts are provided by Tyr-91 and Ser-96. Gly-121 serves as a coordination point for ATP. L-aspartate is bound by residues Thr-123, Asn-127, and Asp-128. Asn-127 is a binding site for L-citrulline. Residues Arg-131, Ser-182, Ser-191, Glu-267, and Tyr-279 each coordinate L-citrulline.

The protein belongs to the argininosuccinate synthase family. Type 1 subfamily. Homotetramer.

The protein resides in the cytoplasm. The catalysed reaction is L-citrulline + L-aspartate + ATP = 2-(N(omega)-L-arginino)succinate + AMP + diphosphate + H(+). The protein operates within amino-acid biosynthesis; L-arginine biosynthesis; L-arginine from L-ornithine and carbamoyl phosphate: step 2/3. The protein is Argininosuccinate synthase of Gluconobacter oxydans (strain 621H) (Gluconobacter suboxydans).